Consider the following 116-residue polypeptide: Large ribosomal subunit protein uL24 (116 aa).

Positions 1-27 (MAGRKSSTPTRHKMHVKTGDTVQVISG) are disordered.

It belongs to the universal ribosomal protein uL24 family. In terms of assembly, part of the 50S ribosomal subunit.

One of two assembly initiator proteins, it binds directly to the 5'-end of the 23S rRNA, where it nucleates assembly of the 50S subunit. In terms of biological role, one of the proteins that surrounds the polypeptide exit tunnel on the outside of the subunit. This is Large ribosomal subunit protein uL24 from Picosynechococcus sp. (strain ATCC 27264 / PCC 7002 / PR-6) (Agmenellum quadruplicatum).